A 326-amino-acid chain; its full sequence is Alkanal monooxygenase beta chain (326 aa).

It belongs to the bacterial luciferase oxidoreductase family. In terms of assembly, heterodimer of an alpha and a beta chain.

It carries out the reaction a long-chain fatty aldehyde + FMNH2 + O2 = a long-chain fatty acid + hnu + FMN + H2O + 2 H(+). Functionally, light-emitting reaction in luminous bacteria. The specific role of the beta subunit is unknown, but it is absolutely required for bioluminescence activity. This is Alkanal monooxygenase beta chain (luxB) from Aliivibrio fischeri (Vibrio fischeri).